We begin with the raw amino-acid sequence, 316 residues long: Ribosomal RNA small subunit methyltransferase H (316 aa).

Residues Ser-35–His-37, Asp-55, Phe-84, Asp-105, and Gln-112 each bind S-adenosyl-L-methionine.

This sequence belongs to the methyltransferase superfamily. RsmH family.

The protein resides in the cytoplasm. The enzyme catalyses cytidine(1402) in 16S rRNA + S-adenosyl-L-methionine = N(4)-methylcytidine(1402) in 16S rRNA + S-adenosyl-L-homocysteine + H(+). Specifically methylates the N4 position of cytidine in position 1402 (C1402) of 16S rRNA. The chain is Ribosomal RNA small subunit methyltransferase H from Streptococcus dysgalactiae subsp. equisimilis (strain GGS_124).